The sequence spans 352 residues: Adenosine deaminase (352 aa).

A2 bears the N-acetylalanine mark. Zn(2+) contacts are provided by H15 and H17. Positions 17 and 19 each coordinate substrate. Residue K54 is modified to N6-acetyllysine. G184 is a binding site for substrate. H214 serves as a coordination point for Zn(2+). The Proton donor role is filled by E217. An N6-acetyllysine modification is found at K232. D295 lines the Zn(2+) pocket. Residue D296 coordinates substrate.

Belongs to the metallo-dependent hydrolases superfamily. Adenosine and AMP deaminases family. In terms of assembly, interacts with DPP4 (via extracellular domain). Interacts with PLG (via Kringle 4 domain); the interaction stimulates PLG activation when in complex with DPP4. It depends on Zn(2+) as a cofactor. In terms of tissue distribution, detected in brain neurons in the median emninence (at protein level). Expressed in secondary deciduum (at protein level). Found in all tissues, occurs in large amounts in T-lymphocytes and, at the time of weaning, in gastrointestinal tissues.

The protein localises to the cell membrane. Its subcellular location is the cell junction. It localises to the cytoplasmic vesicle lumen. The protein resides in the cytoplasm. It is found in the lysosome. The enzyme catalyses adenosine + H2O + H(+) = inosine + NH4(+). It catalyses the reaction 2'-deoxyadenosine + H2O + H(+) = 2'-deoxyinosine + NH4(+). The catalysed reaction is cordycepin + H2O + H(+) = 3'-deoxyinosine + NH4(+). Its function is as follows. Catalyzes the hydrolytic deamination of adenosine and 2-deoxyadenosine. Plays an important role in purine metabolism and in adenosine homeostasis. Modulates signaling by extracellular adenosine, and so contributes indirectly to cellular signaling events. Acts as a positive regulator of T-cell coactivation, by binding DPP4. Its interaction with DPP4 regulates lymphocyte-epithelial cell adhesion. Enhances dendritic cell immunogenicity by affecting dendritic cell costimulatory molecule expression and cytokines and chemokines secretion. Enhances CD4+ T-cell differentiation and proliferation. Acts as a positive modulator of adenosine receptors ADORA1 and ADORA2A, by enhancing their ligand affinity via conformational change. Stimulates plasminogen activation. Plays a role in male fertility. Plays a protective role in early postimplantation embryonic development. Also responsible for the deamination of cordycepin (3'-deoxyadenosine), a fungal natural product that shows antitumor, antibacterial, antifungal, antivirus, and immune regulation properties. This chain is Adenosine deaminase (Ada), found in Mus musculus (Mouse).